We begin with the raw amino-acid sequence, 157 residues long: Ubiquitin-like protein 4A (157 aa).

In terms of domain architecture, Ubiquitin-like spans 1–76 (MQLTVKALQG…LNLVVKPLEK (76 aa)). A Glycyl lysine isopeptide (Lys-Gly) (interchain with G-Cter in ubiquitin) cross-link involves residue K48. Position 90 is a phosphoserine (S90). A required and sufficient for interaction with BAG6 region spans residues 96 to 138 (WHLISKVLARHFSAADASRVLEQLQRDYERSLSRLTLDDIERL).

As to quaternary structure, component of the BAG6/BAT3 complex, at least composed of BAG6, UBL4A and GET4/TRC35. Interacts with BAG6; the interaction is direct and required for UBL4A protein stability. Interacts with USP13; may be indirect via BAG6. Post-translationally, polyubiquitinated. Ubiquitination by AMFR and deubiquitination by USP13 may regulate the interaction between the BAG6/BAT3 complex and SGTA and therefore may regulate client proteins fate.

The protein resides in the cytoplasm. The protein localises to the cytosol. It localises to the nucleus. In terms of biological role, as part of a cytosolic protein quality control complex, the BAG6/BAT3 complex, maintains misfolded and hydrophobic patches-containing proteins in a soluble state and participates in their proper delivery to the endoplasmic reticulum or alternatively can promote their sorting to the proteasome where they undergo degradation. The BAG6/BAT3 complex is involved in the post-translational delivery of tail-anchored/type II transmembrane proteins to the endoplasmic reticulum membrane. Recruited to ribosomes, it interacts with the transmembrane region of newly synthesized tail-anchored proteins and together with SGTA and ASNA1 mediates their delivery to the endoplasmic reticulum. Client proteins that cannot be properly delivered to the endoplasmic reticulum are ubiquitinated and sorted to the proteasome. Similarly, the BAG6/BAT3 complex also functions as a sorting platform for proteins of the secretory pathway that are mislocalized to the cytosol either delivering them to the proteasome for degradation or to the endoplasmic reticulum. The BAG6/BAT3 complex also plays a role in the endoplasmic reticulum-associated degradation (ERAD), a quality control mechanism that eliminates unwanted proteins of the endoplasmic reticulum through their retrotranslocation to the cytosol and their targeting to the proteasome. It maintains these retrotranslocated proteins in an unfolded yet soluble state condition in the cytosol to ensure their proper delivery to the proteasome. The chain is Ubiquitin-like protein 4A (UBL4A) from Oryctolagus cuniculus (Rabbit).